We begin with the raw amino-acid sequence, 518 residues long: MIPDVSQALAWLEKHPQALKGIQRGLERETLRVNADGTLATTGHPEALGSALTHKWITTDFAEALLEFITPVDGDIEHMLTFMRDLHRYTARNMGDERMWPLSMPCYIAEGQDIELAQYGTSNTGRFKTLYREGLKNRYGALMQTISGVHYNFSLPMAFWQAKCGDISGADAKEKISAGYFRVIRNYYRFGWVIPYLFGASPAICSSFLQGKPTSLPFEKTECGMYYLPYATSLRLSDLGYTNKSQSNLGITFNDLYEYVAGLKQAIKTPSEEYAKIGIEKDGKRLQINSNVLQIENELYAPIRPKRVTRSGESPSDALLRGGIEYIEVRSLDINPFSPIGVDEQQVRFLDLFMVWCALADAPEMSSSELACTRVNWNRVILEGRKPGLTLGIGCETAQFPLLQVGKDLFRDLKRVAQTLDSINGGEAYQKVCDELVACFDNPDLTFSARILRSMIDTGIGGTGKAFAEAYRNLLREEPLEILREEDFVAEREASERRQQEMEAADTEPFAVWLEKHA.

This sequence belongs to the glutamate--cysteine ligase type 1 family. Type 1 subfamily.

The catalysed reaction is L-cysteine + L-glutamate + ATP = gamma-L-glutamyl-L-cysteine + ADP + phosphate + H(+). The protein operates within sulfur metabolism; glutathione biosynthesis; glutathione from L-cysteine and L-glutamate: step 1/2. The sequence is that of Glutamate--cysteine ligase from Escherichia coli O139:H28 (strain E24377A / ETEC).